The chain runs to 216 residues: ATP synthase subunit 5, mitochondrial (216 aa).

The protein belongs to the ATPase delta chain family. As to quaternary structure, F-type ATPases have 2 components, CF(1) - the catalytic core - and CF(0) - the membrane proton channel. CF(1) has five subunits: alpha(3), beta(3), gamma(1), delta(1), epsilon(1). CF(0) has three main subunits: a, b and c.

It is found in the mitochondrion. The protein localises to the mitochondrion inner membrane. In terms of biological role, mitochondrial membrane ATP synthase (F(1)F(0) ATP synthase or Complex V) produces ATP from ADP in the presence of a proton gradient across the membrane which is generated by electron transport complexes of the respiratory chain. F-type ATPases consist of two structural domains, F(1) - containing the extramembraneous catalytic core and F(0) - containing the membrane proton channel, linked together by a central stalk and a peripheral stalk. During catalysis, ATP synthesis in the catalytic domain of F(1) is coupled via a rotary mechanism of the central stalk subunits to proton translocation. Part of the complex F(0) domain and the peripheric stalk, which acts as a stator to hold the catalytic alpha(3)beta(3) subcomplex and subunit a/ATP6 static relative to the rotary elements. In Schizosaccharomyces pombe (strain 972 / ATCC 24843) (Fission yeast), this protein is ATP synthase subunit 5, mitochondrial (atp5).